The sequence spans 157 residues: S-ribosylhomocysteine lyase (157 aa).

Positions 53, 57, and 124 each coordinate Fe cation.

This sequence belongs to the LuxS family. Homodimer. The cofactor is Fe cation.

It catalyses the reaction S-(5-deoxy-D-ribos-5-yl)-L-homocysteine = (S)-4,5-dihydroxypentane-2,3-dione + L-homocysteine. Functionally, involved in the synthesis of autoinducer 2 (AI-2) which is secreted by bacteria and is used to communicate both the cell density and the metabolic potential of the environment. The regulation of gene expression in response to changes in cell density is called quorum sensing. Catalyzes the transformation of S-ribosylhomocysteine (RHC) to homocysteine (HC) and 4,5-dihydroxy-2,3-pentadione (DPD). The sequence is that of S-ribosylhomocysteine lyase from Borreliella afzelii (strain PKo) (Borrelia afzelii).